The chain runs to 643 residues: Threonine--tRNA ligase (643 aa).

The TGS domain maps to 1-61 (MIKITLKDGS…NEDSSLEICT (61 aa)). Positions 240–540 (DHNKLGRELG…LIEKYAGALP (301 aa)) are catalytic. The Zn(2+) site is built by cysteine 335, histidine 386, and histidine 517.

It belongs to the class-II aminoacyl-tRNA synthetase family. Homodimer. Requires Zn(2+) as cofactor.

It localises to the cytoplasm. The enzyme catalyses tRNA(Thr) + L-threonine + ATP = L-threonyl-tRNA(Thr) + AMP + diphosphate + H(+). In terms of biological role, catalyzes the attachment of threonine to tRNA(Thr) in a two-step reaction: L-threonine is first activated by ATP to form Thr-AMP and then transferred to the acceptor end of tRNA(Thr). Also edits incorrectly charged L-seryl-tRNA(Thr). The polypeptide is Threonine--tRNA ligase (Clostridium perfringens (strain SM101 / Type A)).